Consider the following 273-residue polypeptide: Putative pyruvate, phosphate dikinase regulatory protein (273 aa).

153 to 160 (GVSRTSKS) lines the ADP pocket.

The protein belongs to the pyruvate, phosphate/water dikinase regulatory protein family. PDRP subfamily.

The catalysed reaction is N(tele)-phospho-L-histidyl/L-threonyl-[pyruvate, phosphate dikinase] + ADP = N(tele)-phospho-L-histidyl/O-phospho-L-threonyl-[pyruvate, phosphate dikinase] + AMP + H(+). The enzyme catalyses N(tele)-phospho-L-histidyl/O-phospho-L-threonyl-[pyruvate, phosphate dikinase] + phosphate + H(+) = N(tele)-phospho-L-histidyl/L-threonyl-[pyruvate, phosphate dikinase] + diphosphate. Bifunctional serine/threonine kinase and phosphorylase involved in the regulation of the pyruvate, phosphate dikinase (PPDK) by catalyzing its phosphorylation/dephosphorylation. This Ehrlichia chaffeensis (strain ATCC CRL-10679 / Arkansas) protein is Putative pyruvate, phosphate dikinase regulatory protein.